The primary structure comprises 1067 residues: Tricorn protease homolog 1 (1067 aa).

The interval 518–551 is disordered; the sequence is TTPSPFGPQRHGRPFETPDREETPDSEGTPTTRI. Basic and acidic residues predominate over residues 530-540; the sequence is RPFETPDREET. His-740 functions as the Charge relay system in the catalytic mechanism. The tract at residues 754-851 is PDZ-like; it reads RQGLLGADLS…HAVVVPLADE (98 aa). Gly-914 is a substrate binding site. The active-site Nucleophile is the Ser-961. The Charge relay system role is filled by Glu-1019.

It belongs to the peptidase S41B family. In terms of assembly, forms a homohexameric complex; it is not known if it assembles into higher-order structures.

Its subcellular location is the cytoplasm. Stimulated by MgCl2. Functionally, degrades oligopeptides in a sequential manner. The chain is Tricorn protease homolog 1 (tri1) from Streptomyces coelicolor (strain ATCC BAA-471 / A3(2) / M145).